Reading from the N-terminus, the 316-residue chain is Ubiquinol oxidase, mitochondrial (316 aa).

The N-terminal 26 residues, 1–26 (MGVRAQPLLARSLITTTQPWILSARS), are a transit peptide targeting the mitochondrion. Residues 124-144 (VHRAVVLETVAAVPGMVAGML) form a helical membrane-spanning segment. Fe cation contacts are provided by Glu-131, Glu-170, and His-173. The chain crosses the membrane as a helical span at residues 189 to 209 (MLVALVQTLFFNVYFLAYMLF). Positions 221, 272, and 275 each coordinate Fe cation.

This sequence belongs to the alternative oxidase family. The cofactor is Fe cation.

Its subcellular location is the mitochondrion inner membrane. It carries out the reaction 2 a ubiquinol + O2 = 2 a ubiquinone + 2 H2O. Functionally, alternative oxidase which function may be to reoxidize reducing equivalents produced by glycolysis such as ubiquinol. The sequence is that of Ubiquinol oxidase, mitochondrial (AOX) from Batrachochytrium dendrobatidis (strain JAM81 / FGSC 10211) (Frog chytrid fungus).